The following is a 97-amino-acid chain: MDSSSSSSAAGLGAVDPQLQHFIEVETQKQRFQQLVHQMTELCWEKCMDKPGPKLDSRAEACFVNCVERFIDTSQFILNRLEQTQKSKPVFSESLSD.

The short motif at 43–66 is the Twin CX3C motif element; it reads CWEKCMDKPGPKLDSRAEACFVNC. Cystine bridges form between Cys-43/Cys-66 and Cys-47/Cys-62. Ser-57, Ser-87, Ser-94, and Ser-96 each carry phosphoserine.

The protein belongs to the small Tim family. As to quaternary structure, heterohexamer; composed of 3 copies of TIMM8A and 3 copies of TIMM13, named soluble 70 kDa complex. Associates with the TIM22 complex, whose core is composed of TIMM22. Highly expressed in fetal and adult brain, followed by fetal lung, liver and kidney. Also expressed in heart, placenta, lung, liver, kidney, pancreas, skeletal muscle and heart.

It localises to the mitochondrion inner membrane. Functionally, mitochondrial intermembrane chaperone that participates in the import and insertion of some multi-pass transmembrane proteins into the mitochondrial inner membrane. Also required for the transfer of beta-barrel precursors from the TOM complex to the sorting and assembly machinery (SAM complex) of the outer membrane. Acts as a chaperone-like protein that protects the hydrophobic precursors from aggregation and guide them through the mitochondrial intermembrane space. The TIMM8-TIMM13 complex mediates the import of proteins such as TIMM23, SLC25A12/ARALAR1 and SLC25A13/ARALAR2, while the predominant TIMM9-TIMM10 70 kDa complex mediates the import of much more proteins. Probably necessary for normal neurologic development. The sequence is that of Mitochondrial import inner membrane translocase subunit Tim8 A (TIMM8A) from Homo sapiens (Human).